The sequence spans 1052 residues: Protein HelA (1052 aa).

The next 13 membrane-spanning stretches (helical) occupy residues 14–34 (WFVLLFTLVIAILGVYNFQRL), 121–141 (LPPGVETTLGPISTGLGEIFM), 348–368 (GALLVCVILFLFLGNIRAALI), 369–389 (TAMVIPLSMLLTITGMVENQI), 393–413 (LMSLGALDFGLIVDGAVIIVE), 450–470 (SIFGVFIITVVYLPILTLTGV), 483–503 (IIALLASMLFALTFVPAAVAI), 537–557 (VVISAAVALVVVSLGIAFHLG), 878–898 (LQIVVPITLLGIFLLLFISFG), 903–923 (ALLVFTGIPLALTGGVFALWL), 934–954 (VGFIALSGVAVLNGLVMITFI), 979–999 (PVLMTALVASLGFVPMALATG), and 1011–1031 (VVIGGIISSTFLTLLVLPGLY).

It belongs to the resistance-nodulation-cell division (RND) (TC 2.A.6) family.

It is found in the cell inner membrane. In terms of biological role, presumed to function with HelC and HelB in efflux of an unidentified substrate. This is Protein HelA (helA) from Legionella pneumophila.